We begin with the raw amino-acid sequence, 569 residues long: Glutamyl-tRNA reductase (569 aa).

Substrate contacts are provided by residues Thr-49–Arg-52, Ser-109, Glu-114–Gln-116, and Gln-120. Cys-50 serves as the catalytic Nucleophile. Gly-192–Ser-197 lines the NADP(+) pocket. The insert stretch occupies residues Pro-284 to Leu-397. The disordered stretch occupies residues Ala-546–Glu-569. Basic and acidic residues predominate over residues Arg-550 to Glu-569.

This sequence belongs to the glutamyl-tRNA reductase family. In terms of assembly, homodimer.

The catalysed reaction is (S)-4-amino-5-oxopentanoate + tRNA(Glu) + NADP(+) = L-glutamyl-tRNA(Glu) + NADPH + H(+). It participates in porphyrin-containing compound metabolism; protoporphyrin-IX biosynthesis; 5-aminolevulinate from L-glutamyl-tRNA(Glu): step 1/2. Catalyzes the NADPH-dependent reduction of glutamyl-tRNA(Glu) to glutamate 1-semialdehyde (GSA). The chain is Glutamyl-tRNA reductase from Streptomyces avermitilis (strain ATCC 31267 / DSM 46492 / JCM 5070 / NBRC 14893 / NCIMB 12804 / NRRL 8165 / MA-4680).